A 280-amino-acid chain; its full sequence is Phosphonoacetaldehyde hydrolase (280 aa).

The Nucleophile role is filled by Asp-20. Positions 20 and 22 each coordinate Mg(2+). Lys-61 serves as the catalytic Schiff-base intermediate with substrate. Residue Asp-194 coordinates Mg(2+).

The protein belongs to the HAD-like hydrolase superfamily. PhnX family. Homodimer. Mg(2+) is required as a cofactor.

It catalyses the reaction phosphonoacetaldehyde + H2O = acetaldehyde + phosphate + H(+). Involved in phosphonate degradation. The sequence is that of Phosphonoacetaldehyde hydrolase from Nitratidesulfovibrio vulgaris (strain DSM 19637 / Miyazaki F) (Desulfovibrio vulgaris).